The sequence spans 363 residues: Chorismate synthase (363 aa).

NADP(+)-binding residues include Arg-48 and Arg-54. FMN is bound by residues 125–127 (RSS), 237–238 (NA), Gly-277, 292–296 (KPTSS), and Arg-318.

This sequence belongs to the chorismate synthase family. In terms of assembly, homotetramer. FMNH2 is required as a cofactor.

It catalyses the reaction 5-O-(1-carboxyvinyl)-3-phosphoshikimate = chorismate + phosphate. Its pathway is metabolic intermediate biosynthesis; chorismate biosynthesis; chorismate from D-erythrose 4-phosphate and phosphoenolpyruvate: step 7/7. Functionally, catalyzes the anti-1,4-elimination of the C-3 phosphate and the C-6 proR hydrogen from 5-enolpyruvylshikimate-3-phosphate (EPSP) to yield chorismate, which is the branch point compound that serves as the starting substrate for the three terminal pathways of aromatic amino acid biosynthesis. This reaction introduces a second double bond into the aromatic ring system. In Pseudomonas savastanoi pv. phaseolicola (strain 1448A / Race 6) (Pseudomonas syringae pv. phaseolicola (strain 1448A / Race 6)), this protein is Chorismate synthase.